Here is an 804-residue protein sequence, read N- to C-terminus: Cell surface sensor MSB2 (804 aa).

The first 20 residues, 1–20 (MHNFSKLAVAFVAAASFASA), serve as a signal peptide directing secretion. Over 21 to 694 (EPETKAKVER…TNQSATQRGT (674 aa)) the chain is Extracellular. The N-linked (GlcNAc...) asparagine glycan is linked to N45. 2 stretches are compositionally biased toward low complexity: residues 46–58 (TTTP…SSTS) and 69–80 (SSFSSSASSSSA). Disordered regions lie at residues 46 to 90 (TTTP…RQPT) and 105 to 220 (TDST…ATSN). Residues 46-475 (TTTPASEASS…SVAPTSATSS (430 aa)) are serine/threonine rich region (STR). Polar residues-rich tracts occupy residues 81 to 90 (QELTASRQPT) and 109 to 126 (PFSQ…SATG). Composition is skewed to low complexity over residues 128–143 (VTPI…PSTA) and 150–169 (SALT…SVTS). N157 is a glycosylation site (N-linked (GlcNAc...) asparagine). The span at 170–188 (PGSTSGPAGTPESSSASDF) shows a compositional bias: polar residues. Over residues 189 to 202 (TSAVATSRASTATS) the composition is skewed to low complexity. 4 N-linked (GlcNAc...) asparagine glycosylation sites follow: N298, N308, N357, and N393. Residues 345-394 (VQTLPPVSTPTANGTVTSPPVDSQTTVLPTTTPGLSSDTIVTSPGVTANS) are compositionally biased toward polar residues. Positions 345–516 (VQTLPPVSTP…APTVLPSDLP (172 aa)) are disordered. Composition is skewed to low complexity over residues 395–407 (TQVP…TIPT) and 427–476 (NNTV…TSSA). N-linked (GlcNAc...) asparagine glycosylation is found at N427 and N433. Residues 482–641 (WLPTTIIVQA…NGMLAHNLTM (160 aa)) form an HKR11-MSB2 homology domain (HMH) region. A compositionally biased stretch (polar residues) spans 493 to 508 (LPSTTGSSTNAPSSAP). N-linked (GlcNAc...) asparagine glycosylation is found at N629, N638, N669, N683, and N686. The tract at residues 658-689 (KPAGAGSGTGGNGSNGPNDVFNNDNNSTNQSA) is disordered. Residues 660–671 (AGAGSGTGGNGS) show a composition bias toward gly residues. Positions 672–686 (NGPNDVFNNDNNSTN) are enriched in low complexity. Residues 695–715 (VAGIAFGAVSLAAAYGAAMFI) traverse the membrane as a helical segment. Topologically, residues 716 to 804 (VARRYKKKRQ…VAQENSLGWN (89 aa)) are cytoplasmic. Disordered regions lie at residues 724–748 (RQAH…PALM) and 762–804 (GVMG…LGWN). Polar residues predominate over residues 731–744 (SSVATPSEMRQSGS). Positions 774-787 (GSNGSGRSAGNSAR) are enriched in low complexity.

It belongs to the HKR1/MSB2 family.

The protein localises to the cell membrane. It localises to the vacuole membrane. Its function is as follows. MSB2 and SHO1 have overlapping functions in recognizing various surface signals for MAPK PMK1 activation and appressorium formation. While MSB2 is critical for sensing surface hydrophobicity and cutin monomers, SHO1 may play a more important role in recognizing rice leaf waxes. In Pyricularia oryzae (strain 70-15 / ATCC MYA-4617 / FGSC 8958) (Rice blast fungus), this protein is Cell surface sensor MSB2.